We begin with the raw amino-acid sequence, 43 residues long: Cytochrome b559 subunit beta (43 aa).

The helical transmembrane segment at 18 to 34 threads the bilayer; that stretch reads WLAIHGLAIPTVFFLGG. Residue His22 coordinates heme.

It belongs to the PsbE/PsbF family. As to quaternary structure, heterodimer of an alpha subunit and a beta subunit. PSII is composed of 1 copy each of membrane proteins PsbA, PsbB, PsbC, PsbD, PsbE, PsbF, PsbH, PsbI, PsbJ, PsbK, PsbL, PsbM, PsbT, PsbX, PsbY, PsbZ, Psb30/Ycf12, at least 3 peripheral proteins of the oxygen-evolving complex and a large number of cofactors. It forms dimeric complexes. The cofactor is heme b.

It localises to the plastid. It is found in the chloroplast thylakoid membrane. Its function is as follows. This b-type cytochrome is tightly associated with the reaction center of photosystem II (PSII). PSII is a light-driven water:plastoquinone oxidoreductase that uses light energy to abstract electrons from H(2)O, generating O(2) and a proton gradient subsequently used for ATP formation. It consists of a core antenna complex that captures photons, and an electron transfer chain that converts photonic excitation into a charge separation. In Phaeodactylum tricornutum (strain CCAP 1055/1), this protein is Cytochrome b559 subunit beta.